The chain runs to 817 residues: MFARGWLLGALLLMTLATVSVARPSLKIDLVNTSAPEEPPTKNQNCVPVLFSVHPGELLKLKCPLSGADDVVWTKDSSSLRPDNRTLVARDWLQISDATPKDSGLYSCSATGLRDCDVFSFIVNVTDAISSGDDEDDTERSDDVGADGEQMRLPYWTFPEKMEKKLHAVPAANTVKFRCAAAGNPKPKMRWLKNAKPFRQEDRMGGYKVRLQHWTLIMESVVPSDKGNYTCLVENQYGSIDHTYTLDVVERSPHRPILQAGLPANVTVQVGQDAKFVCKVYSDAQPHIQWLQHYTKNGSCCGPDGLPYVRVLKTAGVNTTDKEIEVLYLPNVTFEDAGEYTCLAGNSIGISYHTAWLTVHPAETNPIETDYPPDYVEIAIYCIGVFLIACMVVIVVVCRMRTSAKKPDFSSQPAVHKLTKQIPLRRQVTVSSDSSSSMSSSTPLVRITTRRSSAHDDPIPEYDLPEDPRWEFSRDKLTLGKPLGEGCFGQVVMAEALGIDKDKPKEAVTVAVKMLKDDATEKDLSDLVSEMEMMKMIGRHKNIINLLGACTQDGPLYVIVEYASKGNLREYLRARRPPGMEYSYDIARVSDEPLTFKDLVSCTYQVARGMEYLASQKCIHRDLAARNVLVTESNVMKIADFGLARDVHNIDYYKKTTNGRLPVKWMAPEALFDRVYTHQSDVWSFGVLMWEIFTLGGSPYPGIPVEELFKLLKEGHRMDKPANCTNELYMMMKDCWHAISSHRPTFKQLVEDLDRILTLATNEEYLDLCAPVEQYSPSFPDTRSSCPSGDDSVFSHDPLADEPCLPKYQHINGGIKT.

An N-terminal signal peptide occupies residues 1-22; the sequence is MFARGWLLGALLLMTLATVSVA. The Extracellular segment spans residues 23–377; the sequence is RPSLKIDLVN…ETDYPPDYVE (355 aa). 3 Ig-like C2-type domains span residues 26-126, 159-247, and 256-358; these read LKID…VNVT, PEKM…YTLD, and PILQ…AWLT. Asn-32, Asn-84, and Asn-124 each carry an N-linked (GlcNAc...) asparagine glycan. A disulfide bridge links Cys-63 with Cys-108. The heparin-binding stretch occupies residues 161–178; sequence KMEKKLHAVPAANTVKFR. Cysteines 179 and 231 form a disulfide. N-linked (GlcNAc...) asparagine glycans are attached at residues Asn-228, Asn-265, Asn-297, Asn-318, and Asn-331. An intrachain disulfide couples Cys-278 to Cys-342. Residues 378-398 traverse the membrane as a helical segment; it reads IAIYCIGVFLIACMVVIVVVC. Over 399–817 the chain is Cytoplasmic; the sequence is RMRTSAKKPD…YQHINGGIKT (419 aa). The disordered stretch occupies residues 429–465; that stretch reads TVSSDSSSSMSSSTPLVRITTRRSSAHDDPIPEYDLP. A compositionally biased stretch (low complexity) spans 431 to 441; that stretch reads SSDSSSSMSSS. The residue at position 462 (Tyr-462) is a Phosphotyrosine; by autocatalysis. A Protein kinase domain is found at 477–766; the sequence is LTLGKPLGEG…LTLATNEEYL (290 aa). ATP contacts are provided by residues 483–491, Lys-513, 561–563, and Asn-567; these read LGEGCFGQV and EYA. Phosphotyrosine; by autocatalysis is present on Tyr-582. Catalysis depends on Asp-622, which acts as the Proton acceptor. Phosphotyrosine; by autocatalysis occurs at positions 652, 653, and 765.

This sequence belongs to the protein kinase superfamily. Tyr protein kinase family. Fibroblast growth factor receptor subfamily. Monomer. Homodimer after ligand binding. Post-translationally, autophosphorylated. Binding of FGF family members together with heparan sulfate proteoglycan or heparin promotes receptor dimerization and autophosphorylation on tyrosine residues. Autophosphorylation occurs in trans between the two FGFR molecules present in the dimer. In terms of processing, N-glycosylated in the endoplasmic reticulum. The N-glycan chains undergo further maturation to an Endo H-resistant form in the Golgi apparatus. Ubiquitinated. FGFR2 is rapidly ubiquitinated after autophosphorylation, leading to internalization and degradation. Subject to degradation both in lysosomes and by the proteasome.

The protein localises to the cell membrane. Its subcellular location is the golgi apparatus. The protein resides in the cytoplasmic vesicle. It carries out the reaction L-tyrosyl-[protein] + ATP = O-phospho-L-tyrosyl-[protein] + ADP + H(+). Present in an inactive conformation in the absence of bound ligand. Ligand binding leads to dimerization and activation by autophosphorylation on tyrosine residues. Tyrosine-protein kinase that acts as a cell-surface receptor for fibroblast growth factors and plays an essential role in the regulation of cell proliferation, differentiation, migration and apoptosis, and in the regulation of embryonic development. Required for normal embryonic patterning, limb bud development, lung morphogenesis, osteogenesis and skin development. Plays an essential role in the regulation of osteoblast differentiation, proliferation and apoptosis, and is required for normal skeleton development. Promotes cell proliferation in keratinocytes and immature osteoblasts, but promotes apoptosis in differentiated osteoblasts. Phosphorylates PLCG1, FRS2 and PAK4. Ligand binding leads to the activation of several signaling cascades. Activation of PLCG1 leads to the production of the cellular signaling molecules diacylglycerol and inositol 1,4,5-trisphosphate. Phosphorylation of FRS2 triggers recruitment of GRB2, GAB1, PIK3R1 and SOS1, and mediates activation of RAS, MAPK1/ERK2, MAPK3/ERK1 and the MAP kinase signaling pathway, as well as of the AKT1 signaling pathway. FGFR2 signaling is down-regulated by ubiquitination, internalization and degradation. Mutations that lead to constitutive kinase activation or impair normal FGFR2 maturation, internalization and degradation lead to aberrant signaling. Over-expressed FGFR2 promotes activation of STAT1. The chain is Fibroblast growth factor receptor 2 (fgfr2) from Danio rerio (Zebrafish).